A 487-amino-acid chain; its full sequence is N-succinylglutamate 5-semialdehyde dehydrogenase (487 aa).

Position 221-226 (221-226 (GSSRTG)) interacts with NAD(+). Catalysis depends on residues glutamate 244 and cysteine 278.

The protein belongs to the aldehyde dehydrogenase family. AstD subfamily.

It carries out the reaction N-succinyl-L-glutamate 5-semialdehyde + NAD(+) + H2O = N-succinyl-L-glutamate + NADH + 2 H(+). It participates in amino-acid degradation; L-arginine degradation via AST pathway; L-glutamate and succinate from L-arginine: step 4/5. Its function is as follows. Catalyzes the NAD-dependent reduction of succinylglutamate semialdehyde into succinylglutamate. This chain is N-succinylglutamate 5-semialdehyde dehydrogenase, found in Pseudomonas putida (strain GB-1).